A 648-amino-acid polypeptide reads, in one-letter code: Macrolide export ATP-binding/permease protein MacB (648 aa).

The ABC transporter domain maps to 5 to 243 (LELCNVSRSY…QGVDAAVVNT (239 aa)). ATP is bound at residue 41-48 (GVSGSGKS). 5 consecutive transmembrane segments (helical) span residues 273–293 (LLTMLGIIIGIASVVSIVVVG), 417–437 (ANVVGEVVLAGNMPVIVIGVA), 523–543 (LFLTLVAVISLVVGGIGVMNI), 577–597 (VLVCLVGGALGISLSMFIAFM), and 611–631 (LTALASAFLCSTFTGILFGWL).

Belongs to the ABC transporter superfamily. Macrolide exporter (TC 3.A.1.122) family. As to quaternary structure, homodimer. Part of the tripartite efflux system MacAB-TolC, which is composed of an inner membrane transporter, MacB, a periplasmic membrane fusion protein, MacA, and an outer membrane component, TolC. The complex forms a large protein conduit and can translocate molecules across both the inner and outer membranes. Interacts with MacA.

It is found in the cell inner membrane. Part of the tripartite efflux system MacAB-TolC. MacB is a non-canonical ABC transporter that contains transmembrane domains (TMD), which form a pore in the inner membrane, and an ATP-binding domain (NBD), which is responsible for energy generation. Confers resistance against macrolides. The protein is Macrolide export ATP-binding/permease protein MacB of Salmonella choleraesuis (strain SC-B67).